The sequence spans 173 residues: Small ribosomal subunit protein uS11m (173 aa).

This sequence belongs to the universal ribosomal protein uS11 family.

It localises to the mitochondrion. This is Small ribosomal subunit protein uS11m (RPS11) from Acanthamoeba castellanii (Amoeba).